Reading from the N-terminus, the 348-residue chain is N-acetyl-gamma-glutamyl-phosphate reductase (348 aa).

Cys150 is an active-site residue.

This sequence belongs to the NAGSA dehydrogenase family. Type 1 subfamily.

Its subcellular location is the cytoplasm. It catalyses the reaction N-acetyl-L-glutamate 5-semialdehyde + phosphate + NADP(+) = N-acetyl-L-glutamyl 5-phosphate + NADPH + H(+). It participates in amino-acid biosynthesis; L-arginine biosynthesis; N(2)-acetyl-L-ornithine from L-glutamate: step 3/4. Functionally, catalyzes the NADPH-dependent reduction of N-acetyl-5-glutamyl phosphate to yield N-acetyl-L-glutamate 5-semialdehyde. The protein is N-acetyl-gamma-glutamyl-phosphate reductase of Symbiobacterium thermophilum (strain DSM 24528 / JCM 14929 / IAM 14863 / T).